Reading from the N-terminus, the 436-residue chain is Protein 60A (436 aa).

The N-terminal stretch at 1-27 is a signal peptide; that stretch reads MTASLVVLPSLWLILIIFTAPYTHCTQ. A propeptide spanning residues 28-317 is cleaved from the precursor; sequence SGIYIDNGKD…STLHQRKKSK (290 aa). Residues Asn-102, Asn-114, Asn-217, and Asn-229 are each glycosylated (N-linked (GlcNAc...) asparagine). Residues 293-322 are disordered; sequence IKSTSGHSTQKRTKRSTLHQRKKSKSEPVN. Residues 301-316 are compositionally biased toward basic residues; it reads TQKRTKRSTLHQRKKS. Cystine bridges form between Cys-335-Cys-401, Cys-364-Cys-433, and Cys-368-Cys-435. N-linked (GlcNAc...) asparagine glycosylation occurs at Asn-377.

The protein belongs to the TGF-beta family. In terms of assembly, homodimer; disulfide-linked.

The protein localises to the secreted. This is Protein 60A (gbb) from Drosophila virilis (Fruit fly).